A 120-amino-acid chain; its full sequence is NAD(P)H-quinone oxidoreductase subunit 3, chloroplastic (120 aa).

The next 3 membrane-spanning stretches (helical) occupy residues 9 to 29 (IFWA…FLSG), 62 to 82 (YYMF…LYPW), and 88 to 108 (VLGV…IVGL).

The protein belongs to the complex I subunit 3 family. As to quaternary structure, NDH is composed of at least 16 different subunits, 5 of which are encoded in the nucleus.

It localises to the plastid. The protein resides in the chloroplast thylakoid membrane. The enzyme catalyses a plastoquinone + NADH + (n+1) H(+)(in) = a plastoquinol + NAD(+) + n H(+)(out). It carries out the reaction a plastoquinone + NADPH + (n+1) H(+)(in) = a plastoquinol + NADP(+) + n H(+)(out). Functionally, NDH shuttles electrons from NAD(P)H:plastoquinone, via FMN and iron-sulfur (Fe-S) centers, to quinones in the photosynthetic chain and possibly in a chloroplast respiratory chain. The immediate electron acceptor for the enzyme in this species is believed to be plastoquinone. Couples the redox reaction to proton translocation, and thus conserves the redox energy in a proton gradient. In Trachelium caeruleum (Blue throatwort), this protein is NAD(P)H-quinone oxidoreductase subunit 3, chloroplastic.